The chain runs to 427 residues: MSVSFENKETNRGVLTFTISQDQIKPELDRVFKSVKKSLNVPGFRKGHLPRPIFDQKFGEEALYQDAMNALLPNAYEAAVKEAGLEVVAQPKIDVTSMEKGQDWVITAEVVTKPEVKLGDYKNLEVSVDVEKEVTDADVEERIERERNNLAELVIKEAAAENGDTVVIDFVGSIDGVEFDGGKGENFSLGLGSGQFIPGFEDQLVGHSAGETVDVIVTFPEDYQAEDLAGKEAKFVTTIHEVKAKEVPALDDELAKDIDEEVETLADLKEKYSKELAAAKEEAYKDAVEGAAIDTAVENAEIVELPEEMIHEEVHRSVNEFLGNLQRQGINPDMYFQITGTTQEDLHNQYQAEAESRTKTNLVIEAVAKAEGFDASEEEIQKEVEQLAADYNMEVAQVQNLLSADMLKHDITIKKAVELITSTATVK.

In terms of domain architecture, PPIase FKBP-type spans 163–248 (GDTVVIDFVG…IHEVKAKEVP (86 aa)).

The protein belongs to the FKBP-type PPIase family. Tig subfamily.

It localises to the cytoplasm. It catalyses the reaction [protein]-peptidylproline (omega=180) = [protein]-peptidylproline (omega=0). Functionally, involved in protein export. Acts as a chaperone by maintaining the newly synthesized protein in an open conformation. Functions as a peptidyl-prolyl cis-trans isomerase. This is Trigger factor from Streptococcus pneumoniae serotype 4 (strain ATCC BAA-334 / TIGR4).